We begin with the raw amino-acid sequence, 138 residues long: Acidic phospholipase A2 inhibitor vaspin A chain (138 aa).

An N-terminal signal peptide occupies residues 1-16; sequence MRTLWIVAVCLIGVEG. 7 cysteine pairs are disulfide-bonded: Cys42–Cys131, Cys44–Cys60, Cys59–Cys111, Cys65–Cys138, Cys66–Cys104, Cys73–Cys97, and Cys91–Cys102.

The protein belongs to the phospholipase A2 family. Group II subfamily. D49 sub-subfamily. Heterodimer of a toxic basic protein having phospholipase A2 activity (B chain (AC Q8JFG0)) and a non-toxic acidic protein functioning as its inhibitor (A chain). Expressed by the venom gland.

The protein resides in the secreted. Functionally, heterodimer: postsynaptic neurotoxin. Monomer: the acidic chain inhibits the basic phospholipase A2 of the complex. In Vipera aspis aspis (Aspic viper), this protein is Acidic phospholipase A2 inhibitor vaspin A chain.